Reading from the N-terminus, the 130-residue chain is Small ribosomal subunit protein uS9 (130 aa).

Belongs to the universal ribosomal protein uS9 family.

The sequence is that of Small ribosomal subunit protein uS9 from Nitratidesulfovibrio vulgaris (strain ATCC 29579 / DSM 644 / CCUG 34227 / NCIMB 8303 / VKM B-1760 / Hildenborough) (Desulfovibrio vulgaris).